Consider the following 175-residue polypeptide: Cytochrome c-type biogenesis protein CcmE (175 aa).

The Cytoplasmic portion of the chain corresponds to 1-8; sequence MNAVRRKK. Residues 9-29 form a helical; Signal-anchor for type II membrane protein membrane-spanning segment; it reads LIWVAATLAGAIIAVLLVIYA. Topologically, residues 30 to 175 are periplasmic; sequence IGQQTDYYFD…GNHTTSTLQE (146 aa). 2 residues coordinate heme: His-124 and Tyr-128. The tract at residues 142–175 is disordered; that stretch reads AAKGVTPTSEQFSPAIPVKQTAGEGNHTTSTLQE.

It belongs to the CcmE/CycJ family.

The protein localises to the cell inner membrane. Heme chaperone required for the biogenesis of c-type cytochromes. Transiently binds heme delivered by CcmC and transfers the heme to apo-cytochromes in a process facilitated by CcmF and CcmH. This chain is Cytochrome c-type biogenesis protein CcmE, found in Psychrobacter sp. (strain PRwf-1).